We begin with the raw amino-acid sequence, 39 residues long: Cytochrome b6-f complex subunit 5 (39 aa).

The helical transmembrane segment at 5–25 (LLCGIVLGLVPITLLGLFVSA) threads the bilayer.

It belongs to the PetG family. As to quaternary structure, the 4 large subunits of the cytochrome b6-f complex are cytochrome b6, subunit IV (17 kDa polypeptide, PetD), cytochrome f and the Rieske protein, while the 4 small subunits are PetG, PetL, PetM and PetN. The complex functions as a dimer.

The protein localises to the cellular thylakoid membrane. In terms of biological role, component of the cytochrome b6-f complex, which mediates electron transfer between photosystem II (PSII) and photosystem I (PSI), cyclic electron flow around PSI, and state transitions. PetG is required for either the stability or assembly of the cytochrome b6-f complex. The protein is Cytochrome b6-f complex subunit 5 of Prochlorococcus marinus subsp. pastoris (strain CCMP1986 / NIES-2087 / MED4).